We begin with the raw amino-acid sequence, 224 residues long: uncharacterized protein (224 aa).

Residues 1 to 23 (MKKLLAAGIIGLLTVSIASPSFA) form the signal peptide. The region spanning 31 to 224 (NVAVLFDGSG…WEKEAQKFTE (194 aa)) is the VWFA domain.

This sequence to B.subtilis YwmC.

This is an uncharacterized protein from Bacillus subtilis (strain 168).